Here is a 363-residue protein sequence, read N- to C-terminus: MATLRRLQEAPRHLLVCEKSNFGHDKSRHKHLVETHYHNYRVSFLIPECGLLSKKLKDLVMEMGPYYSVKKLPLHELITHEFINTFVKKGSLSALTYNTSIDEDNTVALLPNGKLILSLDKDTYEETGLQGHPSRYSGRKSMRFIISIDLMDLSLNLDSKKYRRISWSFKEKKPLKFDFLLAWHHTGTEESTMMSYFSKYQIREHQPKVALSTVRDLQCPVLQSSSLAGEPEEACNALEFFDWLGAVFCNADLNNEPHNFISTYCCPQPNTVAAQACLCTITGFVLPEKILVLLEQLCHYFDEPKLAPWVTLTVQGFADSPVAWREKEHGFHKGGEHLYNFVVFNNQDYWLQMAVGANDDCPP.

In terms of assembly, component of nuclear RNase P and RNase MRP ribonucleoproteins. RNase P consists of a catalytic RNA moiety and about 10 protein subunits; POP1, POP4, POP5, POP7, RPP14, RPP21, RPP25, RPP30, RPP38 and RPP40. Within the RNase P complex, POP1, POP7 and RPP25 form the 'finger' subcomplex, POP5, RPP14, RPP40 and homodimeric RPP30 form the 'palm' subcomplex, and RPP21, POP4 and RPP38 form the 'wrist' subcomplex. All subunits of the RNase P complex interact with the catalytic RNA. Several subunits of RNase P are also part of the RNase MRP complex. RNase MRP consists of a catalytic RNA moiety and about 8 protein subunits; POP1, POP7, RPP25, RPP30, RPP38, RPP40 and possibly also POP4 and POP5.

It is found in the nucleus. The protein resides in the nucleolus. Component of ribonuclease P, a ribonucleoprotein complex that generates mature tRNA molecules by cleaving their 5'-ends. Also a component of the MRP ribonuclease complex, which cleaves pre-rRNA sequences. In Rattus norvegicus (Rat), this protein is Ribonuclease P protein subunit p40 (Rpp40).